Reading from the N-terminus, the 131-residue chain is Small ribosomal subunit protein uS19 (131 aa).

This sequence belongs to the universal ribosomal protein uS19 family.

Protein S19 forms a complex with S13 that binds strongly to the 16S ribosomal RNA. The chain is Small ribosomal subunit protein uS19 from Cenarchaeum symbiosum (strain A).